The sequence spans 199 residues: Charged multivesicular body protein 1b (199 aa).

2 coiled-coil regions span residues leucine 8–lysine 42 and threonine 178–valine 199. The interval glutamate 167–valine 199 is disordered. Polar residues predominate over residues glutamine 170–threonine 183. The MIT-interacting motif motif lies at aspartate 186 to arginine 196.

It belongs to the SNF7 family. Probable peripherally associated component of the endosomal sorting required for transport complex III (ESCRT-III).

It is found in the cytoplasm. It localises to the cytosol. The protein localises to the endosome. The protein resides in the late endosome membrane. In terms of biological role, probable peripherally associated component of the endosomal sorting required for transport complex III (ESCRT-III) which is involved in multivesicular bodies (MVBs) formation and sorting of endosomal cargo proteins into MVBs. MVBs contain intraluminal vesicles (ILVs) that are generated by invagination and scission from the limiting membrane of the endosome and mostly are delivered to lysosomes enabling degradation of membrane proteins, such as stimulated growth factor receptors, lysosomal enzymes and lipids. The chain is Charged multivesicular body protein 1b (chmp1b) from Xenopus laevis (African clawed frog).